Reading from the N-terminus, the 274-residue chain is MQQLQNVIETAFERRADITPANVDTVTREAVKQVISLLDSGALRVAEKIDGQWVTHQWLKKAVLLSFRINDNQVIDGAESRYFDKAPMKFADYDEARFQKEGFRVVPPAAVRQGAFIARNTVLMPSYVNIGAYVDEGTMVDTWATVGSCAQIGKNVHLSGGVGIGGVLEPLQANPTIIEDNCFIGARSEVVEGVIVEEGSVISMGVYLGQSTKIYDRETGEVHYGRVPAGSVVVSGNLPSKDGKYSLYCAVIVKKVDAKTRGKVGINELLRTID.

Positions 104 and 141 each coordinate substrate.

The protein belongs to the transferase hexapeptide repeat family. In terms of assembly, homotrimer.

It is found in the cytoplasm. It catalyses the reaction (S)-2,3,4,5-tetrahydrodipicolinate + succinyl-CoA + H2O = (S)-2-succinylamino-6-oxoheptanedioate + CoA. The protein operates within amino-acid biosynthesis; L-lysine biosynthesis via DAP pathway; LL-2,6-diaminopimelate from (S)-tetrahydrodipicolinate (succinylase route): step 1/3. In Salmonella typhi, this protein is 2,3,4,5-tetrahydropyridine-2,6-dicarboxylate N-succinyltransferase.